We begin with the raw amino-acid sequence, 1009 residues long: MICAL-like protein 2 (1009 aa).

In terms of domain architecture, Calponin-homology (CH) spans 1 to 107; sequence MAAIKALQEW…YVSQYYNYFH (107 aa). The forms an intramolecular interaction with the C-terminal coiled coil domain keeping the protein in a closed conformation stretch occupies residues 1 to 260; the sequence is MAAIKALQEW…KSSNLASRKP (260 aa). 3 positions are modified to phosphoserine: Ser110, Ser143, and Ser153. Disordered stretches follow at residues 114–180, 247–268, 348–447, and 655–834; these read GMAG…PGTA, SVSP…ADTR, NSSP…TSKV, and SPSI…TSPV. A compositionally biased stretch (polar residues) spans 144 to 171; that stretch reads PAQTQRSPLSPARTNPVVQRNEGGSQRP. In terms of domain architecture, LIM zinc-binding spans 186–248; it reads SICGVCGKHV…THHSSEVTSV (63 aa). Ser249 carries the post-translational modification Phosphoserine. The interval 261 to 393 is necessary and sufficient for interaction with actinins; that stretch reads GGVTADTRPF…QGQTASKGVK (133 aa). Residues 261–805 are mediates targeting to the cell plasma membrane; the sequence is GGVTADTRPF…EDGTRSCKEE (545 aa). The segment covering 348–419 has biased composition (polar residues); it reads NSSPIGWSSP…AWTSSASKTQ (72 aa). Pro residues predominate over residues 430–442; the sequence is PSAPAPASAPAPA. The segment covering 694 to 730 has biased composition (basic and acidic residues); it reads EGWRARLKPVDKKTPAGRSLEQKEPVLAEPRIGDTSR. Composition is skewed to low complexity over residues 731–746 and 755–769; these read KASS…TLTS and PAGS…SPSP. A phosphoserine mark is found at Ser766 and Ser768. Basic and acidic residues predominate over residues 791–817; it reads EPKKQEDGTRSCKEEKSPTRWSRERSA. Residues 806–913 are forms an intramolecular interaction with the N-terminal Calponin-homology and LIM zinc-binding domains-containing region keeping the protein in a closed conformation; the sequence is KSPTRWSRER…LMYKSKDQRL (108 aa). Ser832 bears the Phosphoserine mark. The 148-residue stretch at 833–980 folds into the bMERB domain; it reads PVRLHPDYIP…EQEEDQMLEN (148 aa). Positions 841 to 880 form a coiled coil; it reads IPQEELQRQLQDIESQLDALELRGVELEKRLRAAEGDASE. Residues 913-1009 are mediates interaction with RAB13 and is required for transition from the closed to the open conformation; it reads LEEQQLDLQG…WSSKSKSGQA (97 aa).

As to quaternary structure, interacts with RAB13 (GTP-bound form); competes with RAB8A and is involved in tight junctions assembly. Interacts with RAB8A; competes with RAB13 and is involved in E-cadherin endocytic recycling. Interacts with RAB8B. Interacts (preferentially in opened conformation) with ACTN1 and ACTN4; stimulated by RAB13 activation. Interacts (via calponin-homology (CH) domain) with the filamins FLNA, FLNB and FLNC (via actin-binding domain). In terms of tissue distribution, detected in brain, lung, liver and kidney (at protein level).

The protein resides in the cell membrane. It is found in the cell junction. Its subcellular location is the tight junction. It localises to the recycling endosome. The protein localises to the cell projection. The protein resides in the neuron projection. It is found in the cytoplasm. Its subcellular location is the cytoskeleton. Its function is as follows. Effector of small Rab GTPases RAB8A and RAB13 which is involved in junctional complexes assembly through the regulation of cell adhesion molecules transport to the plasma membrane and actin cytoskeleton reorganization. Regulates the endocytic recycling of occludins, claudins and E-cadherin to the plasma membrane and may thereby regulate the establishment of tight junctions and adherens junctions. In parallel, may regulate actin cytoskeleton reorganization directly through interaction with F-actin or indirectly through actinins and filamins. Undergoes liquid-liquid phase separation to form tubular recycling endosomes. Plays 2 sequential roles in the biogenesis of tubular recycling endosomes: first organizes phase separation and then the closed form formed by interaction with RAB8A promotes endosomal tubulation. The chain is MICAL-like protein 2 (Micall2) from Mus musculus (Mouse).